A 360-amino-acid chain; its full sequence is Phospho-N-acetylmuramoyl-pentapeptide-transferase (360 aa).

The next 10 membrane-spanning stretches (helical) occupy residues 25-45 (RAIL…PWVI), 74-94 (MGGA…SDFG), 97-117 (YVWV…VDDY), 134-154 (YFWQ…TAQA), 168-188 (VALN…VGTS), 199-219 (GLAI…AYLA), 236-256 (AGEL…FLWF), 263-283 (VFMG…VAVI), 288-308 (FVLF…ILQV), and 339-359 (IVRF…TLKF).

It belongs to the glycosyltransferase 4 family. MraY subfamily. The cofactor is Mg(2+).

Its subcellular location is the cell inner membrane. The enzyme catalyses UDP-N-acetyl-alpha-D-muramoyl-L-alanyl-gamma-D-glutamyl-meso-2,6-diaminopimeloyl-D-alanyl-D-alanine + di-trans,octa-cis-undecaprenyl phosphate = di-trans,octa-cis-undecaprenyl diphospho-N-acetyl-alpha-D-muramoyl-L-alanyl-D-glutamyl-meso-2,6-diaminopimeloyl-D-alanyl-D-alanine + UMP. It participates in cell wall biogenesis; peptidoglycan biosynthesis. Catalyzes the initial step of the lipid cycle reactions in the biosynthesis of the cell wall peptidoglycan: transfers peptidoglycan precursor phospho-MurNAc-pentapeptide from UDP-MurNAc-pentapeptide onto the lipid carrier undecaprenyl phosphate, yielding undecaprenyl-pyrophosphoryl-MurNAc-pentapeptide, known as lipid I. This is Phospho-N-acetylmuramoyl-pentapeptide-transferase from Cellvibrio japonicus (strain Ueda107) (Pseudomonas fluorescens subsp. cellulosa).